The primary structure comprises 371 residues: Flagellar P-ring protein (371 aa).

An N-terminal signal peptide occupies residues 1-28 (MPARPTPPAVPLALALAAALAAPAPAAA).

Belongs to the FlgI family. As to quaternary structure, the basal body constitutes a major portion of the flagellar organelle and consists of four rings (L,P,S, and M) mounted on a central rod.

The protein resides in the periplasm. It is found in the bacterial flagellum basal body. Functionally, assembles around the rod to form the L-ring and probably protects the motor/basal body from shearing forces during rotation. The polypeptide is Flagellar P-ring protein (Anaeromyxobacter dehalogenans (strain 2CP-C)).